The primary structure comprises 92 residues: UPF0213 protein H16_B0156 (92 aa).

In terms of domain architecture, GIY-YIG spans 5–80; the sequence is SAWYLYLLEC…KRLSSTQKRA (76 aa).

This sequence belongs to the UPF0213 family.

The sequence is that of UPF0213 protein H16_B0156 from Cupriavidus necator (strain ATCC 17699 / DSM 428 / KCTC 22496 / NCIMB 10442 / H16 / Stanier 337) (Ralstonia eutropha).